The sequence spans 978 residues: Retinoblastoma-related protein 2 (978 aa).

Residues Thr385–Leu585 form a domain A region. The pocket stretch occupies residues Thr385–Pro832. Residues Val586–Val704 are spacer. The disordered stretch occupies residues Gln616–Pro645. The tract at residues Val705–Pro832 is domain B. 2 disordered regions span residues Ser841–His878 and Val947–Ser978. Residues Thr850 to Ser864 show a composition bias toward polar residues. The span at Ser958–Ser971 shows a compositional bias: low complexity.

The protein belongs to the retinoblastoma protein (RB) family.

The protein localises to the nucleus. In terms of biological role, regulator of biological processes that recruits a histone deacetylase to control gene transcription. May play a role in the entry into mitosis, negatively regulating the cell proliferation. Formation of stable complexes with geminiviridae replication-associated proteins may create a cellular environment which favors viral DNA replication. This chain is Retinoblastoma-related protein 2 (RBR2), found in Oryza sativa subsp. japonica (Rice).